We begin with the raw amino-acid sequence, 913 residues long: Pentatricopeptide repeat-containing protein At1g10270 (913 aa).

The disordered stretch occupies residues 34 to 138; that stretch reads SLSPANEDPE…PNAPRLPDST (105 aa). Residues 64 to 73 are compositionally biased toward polar residues; the sequence is DPSQFQIPQN. The segment covering 74–84 has biased composition (pro residues); sequence HTPPIPYPPIP. Positions 99-108 match the Nuclear localization signal motif; the sequence is ERRRRKRRLR. Residues 108–130 are compositionally biased toward basic and acidic residues; the sequence is RIEPPLHALRRDPSAPPPKRDPN. The segment at 134-167 is leucine-zipper; sequence LPDSTSALVGQRLNLHNRVQSLIRASDLDAASKL. PPR repeat units follow at residues 179-214, 215-250, 251-285, 286-316, 321-355, 356-390, 396-426, 435-469, 470-504, 505-539, and 540-574; these read TVFT…NIVP, NVVS…PFAP, SSVT…GQAA, DSTV…LKSK, DGIV…KFRM, HPPT…HAPP, NSDT…VGSK, DYLG…SLPA, DAPS…NLRV, VADF…EPKP, and DPSI…NVGV. A disordered region spans residues 607-913; the sequence is RNAGQSGNTP…QEKKVVELRN (307 aa). Positions 639-649 are enriched in polar residues; the sequence is WTSQGVVHSNS. Composition is skewed to low complexity over residues 650–666 and 673–690; these read GWAN…AYKA and SWSN…SNQT. A 14 X 11 AA approximate tandem repeats of W-x(2)-Q-x(4)-Q-x(2) region spans residues 674 to 858; the sequence is WSNTSDNQQQ…TAQQQWSNQT (185 aa). Polar residues predominate over residues 691 to 700; it reads AGQQPPSWSR. Low complexity predominate over residues 706–727; the sequence is QQQQSWSQQSGWSSPSGHQQSW. The span at 728–761 shows a compositional bias: polar residues; sequence TNQTAGQQQPWANQTPGQQQQWANQTPGQQQQLA. The span at 762-791 shows a compositional bias: low complexity; sequence NQTPGQQQQWANQTPGQQQQWANQNNGHQQ. The span at 792-814 shows a compositional bias: polar residues; the sequence is PWANQNTGHQQSWANQTPSQQQP. Positions 815–845 are enriched in low complexity; it reads WANQTTGQQQGWGNQTTGQQQQWANQTAGQQ. Composition is skewed to polar residues over residues 846 to 867 and 875 to 894; these read SGWT…SQWL and ANQT…QQEP. Basic and acidic residues predominate over residues 899-913; the sequence is ECQETQEKKVVELRN.

The protein belongs to the PPR family. P subfamily. In terms of assembly, interacts with RPB36B through its WQQ domain. As to expression, ubiquitous but preferentially expressed in gametophytes and young embryos.

The protein resides in the nucleus. May function as a transcriptional regulator essential for early embryogenesis. This Arabidopsis thaliana (Mouse-ear cress) protein is Pentatricopeptide repeat-containing protein At1g10270 (GRP23).